The following is a 289-amino-acid chain: Probable 2-keto-3-deoxyxylonate dehydratase (289 aa).

Positions 144, 146, and 164 each coordinate Mg(2+).

This sequence belongs to the FAH family.

The enzyme catalyses 2-dehydro-3-deoxy-D-arabinonate = 2,5-dioxopentanoate + H2O. It functions in the pathway carbohydrate metabolism; D-xylose degradation. Functionally, probable 2-keto-3-deoxyxylonate dehydratase involved in the degradation of D-xylose, a major component of hemicelluloses such as xylan. Catalyzes the fourth reaction in the xylose utilization pathway through dehydratation of 2-dehydro-3-deoxy-D-xylonate into alpha-ketoglutarate semialdehyde (2,5-dioxopentanoate). The chain is Probable 2-keto-3-deoxyxylonate dehydratase from Haloferax volcanii (strain ATCC 29605 / DSM 3757 / JCM 8879 / NBRC 14742 / NCIMB 2012 / VKM B-1768 / DS2) (Halobacterium volcanii).